The primary structure comprises 284 residues: Non-selective voltage-gated ion channel VDAC3 (284 aa).

N-acetylcysteine is present on Cys2. The residue at position 4 (Thr4) is a Phosphothreonine. Residues Lys12, Lys15, and Lys20 each carry the N6-acetyllysine modification. Beta stranded transmembrane passes span 26–35 (MVKIDLKTKS) and 39–48 (VMEFSTSGHA). A Glycyl lysine isopeptide (Lys-Gly) (interchain with G-Cter in ubiquitin) cross-link involves residue Lys54. The next 3 membrane-spanning stretches (beta stranded) occupy residues 55–65 (ASGNLETKYKV), 70–77 (LTFTQKWN), and 81–90 (TLGTEISWEN). N6-acetyllysine is present on Lys91. The chain crosses the membrane as a beta stranded span at residues 96 to 105 (LKLTLDTIFV). Glycyl lysine isopeptide (Lys-Gly) (interchain with G-Cter in ubiquitin) cross-links involve residues Lys110 and Lys111. 10 beta stranded membrane passes run 112–121 (SGKLKASYKR), 124–131 (FSVGSNVD), 138–146 (TIYGWAVLA), 151–159 (LAGYQMSFD), 164–176 (KLSQ…GYKA), 179–186 (FQLHTHVN), 190–199 (EFGGSIYQKV), 203–212 (IETSINLAWT), 219–228 (RFGIAAKYML), and 232–239 (TSLSAKVN). A Phosphoserine modification is found at Ser242. NAD(+)-binding positions include 243–245 (LIG) and 261–265 (SALID). Transmembrane regions (beta stranded) follow at residues 243 to 252 (LIGLGYTQTL) and 255 to 264 (GVKLTLSALI). Lys267 carries the N6-acetyllysine; alternate modification. A Glycyl lysine isopeptide (Lys-Gly) (interchain with G-Cter in ubiquitin); alternate cross-link involves residue Lys267. Residues 274–283 (HKVGLGFELE) traverse the membrane as a beta stranded segment.

This sequence belongs to the eukaryotic mitochondrial porin family. Interacts with ARMC12 in a TBC1D21-dependent manner. Interacts with MISFA. Ubiquitinated by PRKN during mitophagy, leading to its degradation and enhancement of mitophagy. Deubiquitinated by USP30.

The protein resides in the mitochondrion outer membrane. The protein localises to the membrane. The enzyme catalyses chloride(in) = chloride(out). It carries out the reaction K(+)(in) = K(+)(out). Its function is as follows. Non-selective voltage-gated ion channel that mediates the transport of anions and cations through the mitochondrion outer membrane and plasma membrane. Forms a high-conducting channel with a stable open state and a voltage-induced closure with a mild preference for anions over cations. Involved in male fertility and sperm mitochondrial sheath formation. This is Non-selective voltage-gated ion channel VDAC3 from Pongo abelii (Sumatran orangutan).